Consider the following 202-residue polypeptide: Endothelin-1 (202 aa).

A signal peptide spans 1–25; it reads MDYFPVIFSLLFVAFQGAPETAVLG. A propeptide spanning residues 26 to 50 is cleaved from the precursor; sequence AELSPRAEKEVQSPPPSTSWRPRRS. A disordered region spans residues 28–47; sequence LSPRAEKEVQSPPPSTSWRP. Cystine bridges form between Cys-53–Cys-67 and Cys-55–Cys-63. Positions 74–202 are excised as a propeptide; sequence VNTPERVVPY…DQKLIHNRAH (129 aa). Residues 110–124 are endothelin-like; sequence CQCAHQKDKKCWNFC.

The protein belongs to the endothelin/sarafotoxin family.

It is found in the secreted. In terms of biological role, endothelins are endothelium-derived vasoconstrictor peptides. Probable ligand for G-protein coupled receptors EDNRA and EDNRB which activates PTK2B, BCAR1, BCAR3 and, GTPases RAP1 and RHOA cascade in glomerular mesangial cells. Also binds the DEAR/FBXW7-AS1 receptor. Promotes mesenteric arterial wall remodeling via activation of ROCK signaling and subsequent colocalization of NFATC3 with F-actin filaments. NFATC3 then translocates to the nucleus where it subsequently promotes the transcription of the smooth muscle hypertrophy and differentiation marker ACTA2. In Rattus norvegicus (Rat), this protein is Endothelin-1 (Edn1).